The sequence spans 449 residues: Trigger factor (449 aa).

The region spanning 173 to 258 (GDRVTLDFVG…LKKVEWAHLP (86 aa)) is the PPIase FKBP-type domain.

It belongs to the FKBP-type PPIase family. Tig subfamily.

It is found in the cytoplasm. The catalysed reaction is [protein]-peptidylproline (omega=180) = [protein]-peptidylproline (omega=0). Involved in protein export. Acts as a chaperone by maintaining the newly synthesized protein in an open conformation. Functions as a peptidyl-prolyl cis-trans isomerase. This chain is Trigger factor, found in Cupriavidus metallidurans (strain ATCC 43123 / DSM 2839 / NBRC 102507 / CH34) (Ralstonia metallidurans).